Reading from the N-terminus, the 162-residue chain is uncharacterized protein (162 aa).

Helical transmembrane passes span 10–30 (ILSFTYLALVLCLVMPFMLIL), 50–70 (IVELIVLSIFAGFITSFALYN), 96–116 (IAQYEVMVSIFYSLLLLIILL), and 125–145 (FTAIFQIFFTFCAIFVPLFIF).

The protein localises to the cell membrane. This is an uncharacterized protein from Methanocaldococcus jannaschii (strain ATCC 43067 / DSM 2661 / JAL-1 / JCM 10045 / NBRC 100440) (Methanococcus jannaschii).